The primary structure comprises 326 residues: MREVLLSECIDLLYESHFVISKPFGRSCFDLIAKKADLRFLIKILKNIDSLSTEQSEELLNIAKMLQAVPIIIGTRTRNSIMEEGAVYERYGIKAVTFNTFRDQLSGEPPVVYANRGGFFVNIDGAVLRETREKLKISVGELAEISRVSRKTIYKYEQNEANPSAEVAIKIEEYLDVPLIKGINIVDYMEGLKSQKSREEAFEKILKEGEDFKIRVIDILGDMGFNLLETTKAPFDAVAEESKSEDAENQNIIFTNIQETENEEIRRKAMIVDEISKMLNSHSLLVLEKKTNENKQITSMSISELEKIGDTVDLLEFIEKKKKSTK.

The HTH cro/C1-type domain maps to 128–183 (LRETREKLKISVGELAEISRVSRKTIYKYEQNEANPSAEVAIKIEEYLDVPLIKGI). The H-T-H motif DNA-binding region spans 139–158 (VGELAEISRVSRKTIYKYEQ).

In Methanococcus maripaludis (strain C7 / ATCC BAA-1331), this protein is Putative HTH-type transcriptional regulatory protein MmarC7_1702.